A 626-amino-acid chain; its full sequence is Interferon-induced GTP-binding protein MxC (626 aa).

The 274-residue stretch at 40 to 313 (DLNLPAIAVI…LVEHIAKNVP (274 aa)) folds into the Dynamin-type G domain. Positions 50 to 57 (GDQSSGKS) are G1 motif. Residue 50–57 (GDQSSGKS) coordinates GTP. Residues 75–77 (VTR) are G2 motif. Residues 151 to 154 (DLPG) are G3 motif. Residues 151 to 155 (DLPGI) and 220 to 223 (TKPD) each bind GTP. Positions 220–223 (TKPD) are G4 motif. The segment at 252–255 (KCRG) is G5 motif. Residues 534–624 (LRETAFHLTS…ALPKVVHSAN (91 aa)) form the GED domain.

The protein belongs to the TRAFAC class dynamin-like GTPase superfamily. Dynamin/Fzo/YdjA family.

It is found in the cytoplasm. The sequence is that of Interferon-induced GTP-binding protein MxC (mxc) from Danio rerio (Zebrafish).